Reading from the N-terminus, the 336-residue chain is 4-hydroxythreonine-4-phosphate dehydrogenase (336 aa).

Positions 142 and 143 each coordinate substrate. The a divalent metal cation site is built by His-172, His-217, and His-274. Substrate contacts are provided by Lys-282, Asn-291, and Arg-300.

The protein belongs to the PdxA family. As to quaternary structure, homodimer. Zn(2+) is required as a cofactor. Mg(2+) serves as cofactor. It depends on Co(2+) as a cofactor.

It localises to the cytoplasm. It carries out the reaction 4-(phosphooxy)-L-threonine + NAD(+) = 3-amino-2-oxopropyl phosphate + CO2 + NADH. It participates in cofactor biosynthesis; pyridoxine 5'-phosphate biosynthesis; pyridoxine 5'-phosphate from D-erythrose 4-phosphate: step 4/5. In terms of biological role, catalyzes the NAD(P)-dependent oxidation of 4-(phosphooxy)-L-threonine (HTP) into 2-amino-3-oxo-4-(phosphooxy)butyric acid which spontaneously decarboxylates to form 3-amino-2-oxopropyl phosphate (AHAP). The sequence is that of 4-hydroxythreonine-4-phosphate dehydrogenase from Trichlorobacter lovleyi (strain ATCC BAA-1151 / DSM 17278 / SZ) (Geobacter lovleyi).